The following is an 82-amino-acid chain: Large ribosomal subunit protein uL23 (82 aa).

Belongs to the universal ribosomal protein uL23 family. As to quaternary structure, part of the 50S ribosomal subunit. Contacts protein L29.

Its function is as follows. Binds to 23S rRNA. One of the proteins that surrounds the polypeptide exit tunnel on the outside of the ribosome. This Methanosarcina mazei (strain ATCC BAA-159 / DSM 3647 / Goe1 / Go1 / JCM 11833 / OCM 88) (Methanosarcina frisia) protein is Large ribosomal subunit protein uL23.